The chain runs to 138 residues: MATRTQARGAVVELLYAFESGNEEIKKIASSMLEEKKIKNNQLAFALSLFNGVLERINEIDALIEPHLKDWDFKRLGSMEKAILRLGAYEIGFTPTQNPIIINECIELGKLYAEPNTPKFLNAILDSLSKKLTQKPLN.

Belongs to the NusB family.

Functionally, involved in transcription antitermination. Required for transcription of ribosomal RNA (rRNA) genes. Binds specifically to the boxA antiterminator sequence of the ribosomal RNA (rrn) operons. This Helicobacter pylori (strain P12) protein is Transcription antitermination protein NusB.